Consider the following 1827-residue polypeptide: Phenolphthiocerol/phthiocerol polyketide synthase subunit C (1827 aa).

Residues 35-461 (CEPVAVVGIG…GTNAHVVVEQ (427 aa)) form the Ketosynthase family 3 (KS3) domain. Residues Cys-207, His-342, and His-383 each act as for beta-ketoacyl synthase activity in the active site. The acyltransferase stretch occupies residues 566-876 (VFVYSGQGSQ…LAAVGVAASE (311 aa)). The active-site For malonyltransferase activity is Ser-654. An N-terminal hotdog fold region spans residues 910–1037 (HPLLGAHIEM…AKVEQSPREC (128 aa)). Residues 910–1076 (HPLLGAHIEM…QHHGPAFAAL (167 aa)) form a dehydratase region. Residues 910–1198 (HPLLGAHIEM…LRRVERRAVP (289 aa)) enclose the PKS/mFAS DH domain. His-942 (proton acceptor; for dehydratase activity) is an active-site residue. The C-terminal hotdog fold stretch occupies residues 1050 to 1198 (GTTVSPADFY…LRRVERRAVP (149 aa)). The active-site Proton donor; for dehydratase activity is the Asp-1111. The segment at 1439–1617 (ASYVVTGGLG…VINWGPWSEV (179 aa)) is beta-ketoacyl reductase. 1440-1485 (SYVVTGGLGGLGLVVARWLVDRGAGRVVLGGRSDPTDEQCNVLAEL) is an NADP(+) binding site. The 80-residue stretch at 1706 to 1785 (RAVTERMCAR…DLTADLMRQL (80 aa)) folds into the Carrier domain. Ser-1745 bears the O-(pantetheine 4'-phosphoryl)serine mark.

The cofactor is NADP(+). Pantetheine 4'-phosphate is required as a cofactor.

The enzyme catalyses icosanoyl-[(phenol)carboxyphthiodiolenone synthase] + 2 (S)-methylmalonyl-CoA + 3 malonyl-CoA + 5 NADPH + 10 H(+) = C32-carboxyphthiodiolenone-[(phenol)carboxyphthiodiolenone synthase] + 5 CO2 + 5 NADP(+) + 5 CoA + 2 H2O. The catalysed reaction is docosanoyl-[(phenol)carboxyphthiodiolenone synthase] + 2 (S)-methylmalonyl-CoA + 3 malonyl-CoA + 5 NADPH + 10 H(+) = C34-carboxyphthiodiolenone-[(phenol)carboxyphthiodiolenone synthase] + 5 CO2 + 5 NADP(+) + 5 CoA + 2 H2O. It catalyses the reaction 17-(4-hydroxyphenyl)heptadecanoyl-[(phenol)carboxyphthiodiolenone synthase] + 2 (S)-methylmalonyl-CoA + 3 malonyl-CoA + 5 NADPH + 10 H(+) = C35-(phenol)carboxyphthiodiolenone-[(phenol)carboxyphthiodiolenone synthase] + 5 CO2 + 5 NADP(+) + 5 CoA + 2 H2O. It carries out the reaction 19-(4-hydroxyphenyl)nonadecanoyl-[(phenol)carboxyphthiodiolenone synthase] + 2 (S)-methylmalonyl-CoA + 3 malonyl-CoA + 5 NADPH + 10 H(+) = C37-(phenol)carboxyphthiodiolenone-[(phenol)carboxyphthiodiolenone synthase] + 5 CO2 + 5 NADP(+) + 5 CoA + 2 H2O. It participates in lipid metabolism; fatty acid biosynthesis. Its function is as follows. Part of the PpsABCDE complex involved in the biosynthesis of the lipid core common to phthiocerols and phenolphthiocerols by successive additions of malonyl-CoA or methylmalonyl-CoA extender units. PpsA can accept as substrate the activated forms of either icosanoyl (C20), docosanoyl (C22) or lignoceroyl (C24) groups from FadD26, or a (4-hydroxyphenyl)-C17 or (4-hydroxyphenyl)-C19 fatty acyl from FadD29. PpsA initiates the biosynthesis and extends its substrate using a malonyl-CoA extender unit. The PpsB and PpsC proteins add the second and third malonyl-CoA extender units. PpsD adds an (R)-methylmalonyl unit and PpsE adds a second (R)-methylmalonyl unit. The incorporation of the methylmalonyl units results in formation of two branched methyl groups in the elongated product. In Mycobacterium bovis (strain ATCC BAA-935 / AF2122/97), this protein is Phenolphthiocerol/phthiocerol polyketide synthase subunit C (ppsD).